A 286-amino-acid chain; its full sequence is 2-dehydro-3-deoxyphosphooctonate aldolase (286 aa).

Belongs to the KdsA family.

It localises to the cytoplasm. It catalyses the reaction D-arabinose 5-phosphate + phosphoenolpyruvate + H2O = 3-deoxy-alpha-D-manno-2-octulosonate-8-phosphate + phosphate. It participates in carbohydrate biosynthesis; 3-deoxy-D-manno-octulosonate biosynthesis; 3-deoxy-D-manno-octulosonate from D-ribulose 5-phosphate: step 2/3. The protein operates within bacterial outer membrane biogenesis; lipopolysaccharide biosynthesis. This is 2-dehydro-3-deoxyphosphooctonate aldolase from Shewanella denitrificans (strain OS217 / ATCC BAA-1090 / DSM 15013).